An 886-amino-acid chain; its full sequence is DNA double-strand break repair Rad50 ATPase (886 aa).

Residues R13, 33 to 39 (NGAGKSS), and Q128 contribute to the ATP site. Coiled-coil stretches lie at residues 183-360 (EQIK…LLET) and 400-433 (KEITEKLKKLIAKKSSLKTRGAQLKKAVEELKSA). Residues 392–489 (LSKAKEEEKE…RLEKVEKALE (98 aa)) enclose the Zinc-hook domain. 2 residues coordinate Zn(2+): C437 and C440. Coiled coils occupy residues 489–518 (EKQETVLKYRQMVDELKALENELSSHDAEK) and 545–713 (SSAS…KKVE). 792 to 797 (FLSGGE) contacts ATP.

It belongs to the SMC family. RAD50 subfamily. As to quaternary structure, homodimer. Forms a heterotetramer composed of two Mre11 subunits and two Rad50 subunits. It depends on Zn(2+) as a cofactor.

In terms of biological role, part of the Rad50/Mre11 complex, which is involved in the early steps of DNA double-strand break (DSB) repair. The complex may facilitate opening of the processed DNA ends to aid in the recruitment of HerA and NurA. Rad50 controls the balance between DNA end bridging and DNA resection via ATP-dependent structural rearrangements of the Rad50/Mre11 complex. The sequence is that of DNA double-strand break repair Rad50 ATPase from Archaeoglobus fulgidus (strain ATCC 49558 / DSM 4304 / JCM 9628 / NBRC 100126 / VC-16).